The following is a 122-amino-acid chain: S-adenosylmethionine decarboxylase proenzyme (122 aa).

The Schiff-base intermediate with substrate; via pyruvic acid role is filled by serine 63. Residue serine 63 is modified to Pyruvic acid (Ser); by autocatalysis. Catalysis depends on histidine 68, which acts as the Proton acceptor; for processing activity. Cysteine 83 functions as the Proton donor; for catalytic activity in the catalytic mechanism.

It belongs to the prokaryotic AdoMetDC family. Type 1 subfamily. As to quaternary structure, heterotetramer of two alpha and two beta chains arranged as a dimer of alpha/beta heterodimers. The cofactor is pyruvate. In terms of processing, is synthesized initially as an inactive proenzyme. Formation of the active enzyme involves a self-maturation process in which the active site pyruvoyl group is generated from an internal serine residue via an autocatalytic post-translational modification. Two non-identical subunits are generated from the proenzyme in this reaction, and the pyruvate is formed at the N-terminus of the alpha chain, which is derived from the carboxyl end of the proenzyme. The post-translation cleavage follows an unusual pathway, termed non-hydrolytic serinolysis, in which the side chain hydroxyl group of the serine supplies its oxygen atom to form the C-terminus of the beta chain, while the remainder of the serine residue undergoes an oxidative deamination to produce ammonia and the pyruvoyl group blocking the N-terminus of the alpha chain.

The catalysed reaction is S-adenosyl-L-methionine + H(+) = S-adenosyl 3-(methylsulfanyl)propylamine + CO2. It participates in amine and polyamine biosynthesis; S-adenosylmethioninamine biosynthesis; S-adenosylmethioninamine from S-adenosyl-L-methionine: step 1/1. Its function is as follows. Catalyzes the decarboxylation of S-adenosylmethionine to S-adenosylmethioninamine (dcAdoMet), the propylamine donor required for the synthesis of the polyamines spermine and spermidine from the diamine putrescine. This is S-adenosylmethionine decarboxylase proenzyme from Methanococcus vannielii (strain ATCC 35089 / DSM 1224 / JCM 13029 / OCM 148 / SB).